The sequence spans 330 residues: Ferrochelatase (330 aa).

Residues histidine 200 and glutamate 281 each contribute to the Fe cation site.

Belongs to the ferrochelatase family.

The protein resides in the cytoplasm. It catalyses the reaction heme b + 2 H(+) = protoporphyrin IX + Fe(2+). Its pathway is porphyrin-containing compound metabolism; protoheme biosynthesis; protoheme from protoporphyrin-IX: step 1/1. Catalyzes the ferrous insertion into protoporphyrin IX. In Marinomonas sp. (strain MWYL1), this protein is Ferrochelatase.